A 396-amino-acid polypeptide reads, in one-letter code: MALVRWGLKRQNFHPLRRRRRALLLKLTVVIISVLLFCEYFIYYLVLFRCHWPEVKTLAHGGRQEPVLKAMFLADTHLLGEIRGHWLDKLRREWQMERAFQTALWLLQPEVVFILGDIFDEGKWSSDQAWADDVQRFQRMFRHDSHVQLKVVIGNHDVGFHYQMSKYRIKRFEKVFGSERLLSLKGVNFVMVNSVAMEGDGCIICSEEEAELREISRKLNCSQEVPGSSQCDREPEPRLPLSAPVLLQHYPLYRASDANCSGEDAAPPEERNVPFEEKYDVLSREASQKLLWWLRPRLVLSGHTHSACEVLHPGGAPEVSVPSFSWRNRNNPSFIMGSLTSRDYALSKCYLPFEDTVLTMYGAAAGFLMILILVHFEHLPSPFLCGWKLCRLHMRR.

Residues 28-48 traverse the membrane as a helical segment; it reads TVVIISVLLFCEYFIYYLVLF. A divalent metal cation is bound by residues Asp75, Asp117, Asn155, His249, His303, and His305. Residues 356–376 form a helical membrane-spanning segment; that stretch reads TVLTMYGAAAGFLMILILVHF.

It belongs to the metallophosphoesterase superfamily. MPPE1 family. As to quaternary structure, interacts with GPI-anchor proteins (via the GPI portion). Interacts with TMED10. Mn(2+) is required as a cofactor.

The protein resides in the endoplasmic reticulum-Golgi intermediate compartment membrane. Functionally, metallophosphoesterase that catalyzes the removal of a side-chain ethanolamine-phosphate (EtNP) from the second mannose of the GPI-anchor protein intermediate. Participates in the glycan remodeling steps of GPI-anchor maturation to allow an efficient transport of GPI-anchor proteins from the endoplasmic reticulum to the Golgi. This is Metallophosphoesterase 1 from Mus musculus (Mouse).